Reading from the N-terminus, the 395-residue chain is MSTSSNASHWDIFCTVVDNYGDIGVTWRLAKQLVNEYHIPIILWVDDLNSFSHILPTLNPKLVSQCFNGVIINHWTTPLAVPYLPGKVLIEAFACELPDEVKLQLATLHKTAPQAVPLWLNLEYLSAEDWVDGCHGLPSMQVSGIKKYFYFPGFTPKTGGLICERELFAERDAWQQDPANKLQLFESLGLKDIQAQDSVFSIFSYETDSLPALCELWQARAKNDAKIHALLPKGRSLNSLQHLLPCPVDALMPGQQIKLGDLTLHILPMTDQQGFDRLLWSCDVNIVRGEDSFLRAQWAAKPFIWHIYPQEDDYHLIKLEAFIRLYCDNLAPDIADTWSKLNFAFSQGQQSAVKTHWQNLNPVSLPLLQHAKEWPIDAINAADLATRLVQFVKKS.

DTDP-beta-L-rhamnose-binding positions include 19-22 (NYGD), tyrosine 205, glutamine 272, and 288-292 (RGEDS). Aspartate 22 (proton acceptor) is an active-site residue. Glutamate 290 is a catalytic residue.

Belongs to the glycosyltransferase 104 family.

It carries out the reaction dTDP-beta-L-rhamnose + L-arginyl-[protein] = N(omega)-(alpha-L-rhamnosyl)-L-arginyl-[protein] + dTDP + H(+). Functionally, protein-arginine rhamnosyltransferase that catalyzes the transfer of a single rhamnose to elongation factor P (EF-P) on 'Lys-32', a modification required for EF-P-dependent rescue of polyproline stalled ribosomes. The chain is Protein-arginine rhamnosyltransferase from Shewanella oneidensis (strain ATCC 700550 / JCM 31522 / CIP 106686 / LMG 19005 / NCIMB 14063 / MR-1).